Consider the following 31-residue polypeptide: MLTLTSYFGFLLAALTITSALFIGLNKIRLI.

The chain crosses the membrane as a helical span at residues 4–26 (LTSYFGFLLAALTITSALFIGLN).

The protein belongs to the PetL family. As to quaternary structure, the 4 large subunits of the cytochrome b6-f complex are cytochrome b6, subunit IV (17 kDa polypeptide, PetD), cytochrome f and the Rieske protein, while the 4 small subunits are PetG, PetL, PetM and PetN. The complex functions as a dimer.

The protein localises to the plastid. Its subcellular location is the chloroplast thylakoid membrane. Component of the cytochrome b6-f complex, which mediates electron transfer between photosystem II (PSII) and photosystem I (PSI), cyclic electron flow around PSI, and state transitions. PetL is important for photoautotrophic growth as well as for electron transfer efficiency and stability of the cytochrome b6-f complex. This Amaranthus caudatus (Love-lies-bleeding) protein is Cytochrome b6-f complex subunit 6.